Consider the following 729-residue polypeptide: Fibroblast growth factor receptor homolog 1 (729 aa).

Residues 1-36 (MAAAWSWRASHSTITMTSGSLVVLFLLLSIWQPAVQ) form the signal peptide. Topologically, residues 37–309 (VEGRRQMANS…VASGSLHSTS (273 aa)) are extracellular. The tract at residues 56-101 (ARSQNKTPAITNNANQSSTSSADLDDGAADDDDNKADLPVNVSSKP) is disordered. Residues 66 to 77 (TNNANQSSTSSA) show a composition bias toward low complexity. An N-linked (GlcNAc...) asparagine glycan is attached at N70. Residues 78-89 (DLDDGAADDDDN) are compositionally biased toward acidic residues. 9 N-linked (GlcNAc...) asparagine glycosylation sites follow: N96, N134, N140, N171, N207, N213, N242, N246, and N282. Ig-like C2-type domains follow at residues 106-192 (PKKM…VIVS) and 203-279 (TGPL…NSLG). An intrachain disulfide couples C125 to C174. The cysteines at positions 220 and 272 are disulfide-linked. The helical transmembrane segment at 310–330 (FVYIFVFGGLIFIFMTTLFVF) threads the bilayer. Residues 331-729 (YAIRKMKHEK…TDNLQKWCNY (399 aa)) are Cytoplasmic-facing. Residues 416–692 (LVLGATLGEG…EIVEYMDKLL (277 aa)) enclose the Protein kinase domain. ATP is bound by residues 422–430 (LGEGAFGRV) and K443. The active-site Proton acceptor is the D556. Y587 is subject to Phosphotyrosine; by autocatalysis.

Belongs to the protein kinase superfamily. Tyr protein kinase family. Fibroblast growth factor receptor subfamily. As to expression, in early embryos, expression is specific to mesodermal primordium and invaginated mesodermal cells. At later stages, expression is seen in putative muscle precursor cells and in the CNS.

Its subcellular location is the membrane. The catalysed reaction is L-tyrosyl-[protein] + ATP = O-phospho-L-tyrosyl-[protein] + ADP + H(+). May be required for patterning of muscle precursor cells. May be essential for generation of mesodermal and endodermal layers, invaginations of various types of cells and CNS formation. This chain is Fibroblast growth factor receptor homolog 1 (htl), found in Drosophila melanogaster (Fruit fly).